We begin with the raw amino-acid sequence, 1598 residues long: Serine/threonine-protein kinase Nek1 (1598 aa).

A Protein kinase domain is found at 106–380 (YEVIRQIGAG…ALQCLGYTIF (275 aa)). ATP is bound by residues 112-120 (IGAGRFGEV) and Lys-135. The active-site Proton acceptor is the Asp-240.

Belongs to the protein kinase superfamily. NEK Ser/Thr protein kinase family. NIMA subfamily.

It is found in the cytoplasm. Its subcellular location is the cytoskeleton. The protein localises to the microtubule organizing center. The protein resides in the centrosome. It localises to the spindle pole. The catalysed reaction is L-seryl-[protein] + ATP = O-phospho-L-seryl-[protein] + ADP + H(+). It carries out the reaction L-threonyl-[protein] + ATP = O-phospho-L-threonyl-[protein] + ADP + H(+). Phosphorylation status of the T-loop (amino acids 267-293) modulates kinase activity and subcellular localization of the protein. Functionally, probable serine/threonine-protein kinase. Involved in controlling centrosome splitting. Promotes separation of the centrosome outer cores. In Toxoplasma gondii (strain ATCC 50611 / Me49), this protein is Serine/threonine-protein kinase Nek1.